A 318-amino-acid chain; its full sequence is Replication factor C small subunit (318 aa).

43 to 50 (GSVGTGKT) serves as a coordination point for ATP.

It belongs to the activator 1 small subunits family. RfcS subfamily. As to quaternary structure, heteromultimer composed of small subunits (RfcS) and large subunits (RfcL).

Part of the RFC clamp loader complex which loads the PCNA sliding clamp onto DNA. The polypeptide is Replication factor C small subunit (Thermoplasma volcanium (strain ATCC 51530 / DSM 4299 / JCM 9571 / NBRC 15438 / GSS1)).